Here is a 297-residue protein sequence, read N- to C-terminus: MYPPNSSKSTAHDGGGDADTNQYDSAAGATRDFSSLGPQTHHHPPPQRQQQHQQNPNLVGHYLPGEPSSIGFDSNASSSSSLFRHRSSPAGFYDQHLPTDPNGTGFSLGRPNGGYGGGGEQGPSRLKSELRFSSGSSSHQEHNSLPRISEVEAAAAARNGVASSSMSFGNNRTNNWDNSSSHISFTIDQPGKRSKNSDFFTLETQYSMPQTTLEMATMENLMNIPEDSVPCRARAKRGFATHPRSIAERERRTRISGKLKKLQELVPNMDKQTSYADMLDLAVEHIKGLQHQVEVRP.

The segment at 1 to 145 (MYPPNSSKST…SSSHQEHNSL (145 aa)) is disordered. Ser-35 is subject to Phosphoserine. Over residues 68 to 82 (SSIGFDSNASSSSSL) the composition is skewed to low complexity. Residues 111–121 (PNGGYGGGGEQ) show a composition bias toward gly residues. Position 138 is a phosphoserine (Ser-138). In terms of domain architecture, bHLH spans 239–289 (FATHPRSIAERERRTRISGKLKKLQELVPNMDKQTSYADMLDLAVEHIKGL).

As to quaternary structure, homodimer.

It is found in the nucleus. This chain is Transcription factor bHLH129 (BHLH129), found in Arabidopsis thaliana (Mouse-ear cress).